The primary structure comprises 275 residues: Autophagy protein 5 (275 aa).

Residue Met-1 is modified to N-acetylmethionine. Residue Lys-130 forms a Glycyl lysine isopeptide (Lys-Gly) (interchain with G-Cter in ATG12) linkage.

This sequence belongs to the ATG5 family. Forms a conjugate with ATG12. Part of the minor complex composed of 4 sets of ATG12-ATG5 and ATG16L1 (400 kDa); this complex interacts with ATG3 leading to disruption of ATG7 interaction and promotion of ATG8-like proteins lipidation. Forms an 800-kDa complex composed of ATG12-ATG5 and ATG16L2. The ATG12-ATG5 conjugate interacts with RAB33A; this interaction is bridged by ATG16L1 and promotes ATG12-ATG5-ATG16L1 complex recruitment to phagophores. Interacts with TECPR1; the interaction is direct and does not take place when ATG16L1 is associated with the ATG5-ATG12 conjugate. Interacts with DHX58/RIG-1, IFIH1/MDA5 and MAVS/IPS-1 in monomeric form as well as in ATG12-ATG5 conjugate form. The interaction with MAVS is further enhanced upon vesicular stomatitis virus (VSV) infection. Interacts with ATG3. Interacts with ATG7 and ATG10. Interacts with FADD. Interacts with Bassoon/BSN; this interaction is important for the regulation of presynaptic autophagy. Interacts with ATG16L2. In terms of processing, conjugated to ATG12; which is essential for autophagy, but is not required for association with isolation membrane. Post-translationally, acetylated by EP300.

Its subcellular location is the cytoplasm. It localises to the preautophagosomal structure membrane. In terms of biological role, involved in autophagic vesicle formation. Conjugation with ATG12, through a ubiquitin-like conjugating system involving ATG7 as an E1-like activating enzyme and ATG10 as an E2-like conjugating enzyme, is essential for its function. The ATG12-ATG5 conjugate acts as an E3-like enzyme which is required for lipidation of ATG8 family proteins and their association to the vesicle membranes. Involved in mitochondrial quality control after oxidative damage, and in subsequent cellular longevity. Plays a critical role in multiple aspects of lymphocyte development and is essential for both B and T lymphocyte survival and proliferation. Required for optimal processing and presentation of antigens for MHC II. Involved in the maintenance of axon morphology and membrane structures, as well as in normal adipocyte differentiation. Promotes primary ciliogenesis through removal of OFD1 from centriolar satellites and degradation of IFT20 via the autophagic pathway. As part of the ATG8 conjugation system with ATG12 and ATG16L1, required for recruitment of LRRK2 to stressed lysosomes and induction of LRRK2 kinase activity in response to lysosomal stress. May play an important role in the apoptotic process, possibly within the modified cytoskeleton. Its expression is a relatively late event in the apoptotic process, occurring downstream of caspase activity. Plays a crucial role in IFN-gamma-induced autophagic cell death by interacting with FADD. The protein is Autophagy protein 5 of Pongo abelii (Sumatran orangutan).